A 359-amino-acid chain; its full sequence is Protein-glutamate methylesterase/protein-glutamine glutaminase 2 (359 aa).

A Response regulatory domain is found at Lys-6–Asp-123. A 4-aspartylphosphate modification is found at Asp-57. A CheB-type methylesterase domain is found at Glu-167 to Cys-359. Catalysis depends on residues Ser-179, His-205, and Asp-301.

The protein belongs to the CheB family. Phosphorylated by CheA. Phosphorylation of the N-terminal regulatory domain activates the methylesterase activity.

The protein resides in the cytoplasm. It catalyses the reaction [protein]-L-glutamate 5-O-methyl ester + H2O = L-glutamyl-[protein] + methanol + H(+). The catalysed reaction is L-glutaminyl-[protein] + H2O = L-glutamyl-[protein] + NH4(+). Its function is as follows. Involved in chemotaxis. Part of a chemotaxis signal transduction system that modulates chemotaxis in response to various stimuli. Catalyzes the demethylation of specific methylglutamate residues introduced into the chemoreceptors (methyl-accepting chemotaxis proteins or MCP) by CheR. Also mediates the irreversible deamidation of specific glutamine residues to glutamic acid. The chain is Protein-glutamate methylesterase/protein-glutamine glutaminase 2 from Dechloromonas aromatica (strain RCB).